The chain runs to 88 residues: Small ribosomal subunit protein uS15 (88 aa).

The protein belongs to the universal ribosomal protein uS15 family. In terms of assembly, part of the 30S ribosomal subunit. Forms a bridge to the 50S subunit in the 70S ribosome, contacting the 23S rRNA.

Its function is as follows. One of the primary rRNA binding proteins, it binds directly to 16S rRNA where it helps nucleate assembly of the platform of the 30S subunit by binding and bridging several RNA helices of the 16S rRNA. In terms of biological role, forms an intersubunit bridge (bridge B4) with the 23S rRNA of the 50S subunit in the ribosome. This chain is Small ribosomal subunit protein uS15, found in Polaromonas naphthalenivorans (strain CJ2).